An 82-amino-acid chain; its full sequence is ATP synthase subunit c (82 aa).

The next 2 helical transmembrane spans lie at 7–27 and 57–77; these read AASV…PGIG and LAFM…LLFA.

It belongs to the ATPase C chain family. In terms of assembly, F-type ATPases have 2 components, F(1) - the catalytic core - and F(0) - the membrane proton channel. F(1) has five subunits: alpha(3), beta(3), gamma(1), delta(1), epsilon(1). F(0) has four main subunits: a(1), b(1), b'(1) and c(10-14). The alpha and beta chains form an alternating ring which encloses part of the gamma chain. F(1) is attached to F(0) by a central stalk formed by the gamma and epsilon chains, while a peripheral stalk is formed by the delta, b and b' chains.

The protein localises to the cellular thylakoid membrane. Functionally, f(1)F(0) ATP synthase produces ATP from ADP in the presence of a proton or sodium gradient. F-type ATPases consist of two structural domains, F(1) containing the extramembraneous catalytic core and F(0) containing the membrane proton channel, linked together by a central stalk and a peripheral stalk. During catalysis, ATP synthesis in the catalytic domain of F(1) is coupled via a rotary mechanism of the central stalk subunits to proton translocation. In terms of biological role, key component of the F(0) channel; it plays a direct role in translocation across the membrane. A homomeric c-ring of between 10-14 subunits forms the central stalk rotor element with the F(1) delta and epsilon subunits. The polypeptide is ATP synthase subunit c (Synechococcus sp. (strain RCC307)).